The following is a 313-amino-acid chain: MSFPTVFIDGDQGTTGLQIHARLRDRTDVRLLTLPAAERKDAARRADALNACDIAILCLPDAAAREAVGFIRNPAVRVIDASSAHRTQPDWVYGFPEMADGHAHDIAHAKRVTNPGCYPTGAIGLLRPLLQAGLLPRDYPVSIHAVSGYSGGGRAAVDAFESGDAAARALPLQVYGLALEHKHVPEIRQHAGLAHRPFFVPAYGAYRQGIVLTIPIELRLLPAGVTGERLHACLAHHYADARHVDVMPLADAAAATHLDPQALNGTNDLRLGVLVNADGGQVLLSAVFDNLGKGASGAAVQNLDLMLGARHAA.

Cys117 is an active-site residue.

It belongs to the NAGSA dehydrogenase family. Type 2 subfamily.

Its subcellular location is the cytoplasm. It catalyses the reaction N-acetyl-L-glutamate 5-semialdehyde + phosphate + NADP(+) = N-acetyl-L-glutamyl 5-phosphate + NADPH + H(+). It participates in amino-acid biosynthesis; L-arginine biosynthesis; N(2)-acetyl-L-ornithine from L-glutamate: step 3/4. Functionally, catalyzes the NADPH-dependent reduction of N-acetyl-5-glutamyl phosphate to yield N-acetyl-L-glutamate 5-semialdehyde. This Burkholderia orbicola (strain MC0-3) protein is N-acetyl-gamma-glutamyl-phosphate reductase.